Here is a 121-residue protein sequence, read N- to C-terminus: U15-barytoxin-Tl1a (121 aa).

Residues 1–17 (MKLSVIVLVASFGFAVA) form the signal peptide. 4 disulfide bridges follow: C56-C74, C67-C80, C71-C119, and C73-C90.

This sequence belongs to the neurotoxin 03 (Tx2) family. 03 subfamily. In terms of tissue distribution, expressed by the venom gland.

It is found in the secreted. In terms of biological role, ion channel inhibitor. This is U15-barytoxin-Tl1a from Trittame loki (Brush-footed trapdoor spider).